A 202-amino-acid chain; its full sequence is Syndecan-4 (202 aa).

Residues 1–23 (MAPVCLFAPLLLLLLGGFPVAPG) form the signal peptide. The Extracellular portion of the chain corresponds to 24 to 149 (ESIRETEVID…QGSNIFERTE (126 aa)). Disordered stretches follow at residues 42–76 (YFSG…TEEP) and 89–138 (LDNH…MSST). O-linked (Xyl...) (glycosaminoglycan) serine glycosylation occurs at serine 44. Residues 48–62 (PDDEDAGGLEQDSDF) show a composition bias toward acidic residues. Serine 65 and serine 67 each carry an O-linked (Xyl...) (glycosaminoglycan) serine glycan. Positions 105 to 121 (SEPKELEENEVIPKRVP) are enriched in basic and acidic residues. The helical transmembrane segment at 150-174 (VLAALIVGGVVGILFAVFLILLLVY) threads the bilayer. Residues 175–202 (RMKKKDEGSYDLGKKPIYKKAPTNEFYA) are Cytoplasmic-facing.

It belongs to the syndecan proteoglycan family. Homodimer. Interacts with CDCP1 and SDCBP. Interacts (via its cytoplasmic domain) with GIPC (via its PDZ domain). Interacts (via its cytoplasmic domain) with NUDT16L1. Interacts with DNM2; this interaction is markedly enhanced at focal ahesion site upon induction of focal adhesions and stress-fiber formation. Post-translationally, shedding is enhanced by a number of factors such as heparanase, thrombin or EGF. Also by stress and wound healing. PMA-mediated shedding is inhibited by TIMP3. O-glycosylated; contains both chondroitin sulfate and heparan sulfate. Ser-44, Ser-65 and Ser-67 can all be modified by either chondroitin sulfate or heparan sulfate, and the protein exists in forms that contain only chondroitin sulfate, only heparan sulfate and both chondroitin sulfate and heparan sulfate.

It localises to the membrane. Its subcellular location is the secreted. In terms of biological role, cell surface proteoglycan which regulates exosome biogenesis in concert with SDCBP and PDCD6IP. This Rattus norvegicus (Rat) protein is Syndecan-4.